Reading from the N-terminus, the 80-residue chain is UPF0248 protein MJ1316 (80 aa).

It belongs to the UPF0248 family.

The sequence is that of UPF0248 protein MJ1316 from Methanocaldococcus jannaschii (strain ATCC 43067 / DSM 2661 / JAL-1 / JCM 10045 / NBRC 100440) (Methanococcus jannaschii).